The following is a 608-amino-acid chain: Protein FAM151A (608 aa).

Residues 14-34 (WILAGSVSMTLVLAISMILGL) traverse the membrane as a helical segment. The disordered stretch occupies residues 588 to 608 (RHRPSSRTGPSYVEGFPGESR).

The protein belongs to the menorin family.

Its subcellular location is the membrane. The chain is Protein FAM151A (Fam151a) from Rattus norvegicus (Rat).